A 157-amino-acid polypeptide reads, in one-letter code: MDNSIHDELFQAIQQFALKRDKRVWQKVQIPSIGISSQHHDHLKKDWTLTQLHIVSCIHTSQNVNNSFLASRLHISKAAVSKAVHALLKHNIITVTKKPGNKKEIFYTLTDSGRKLAALHEQLHEKAKEQYKQLFNEFSIDDLKTVTAFFNLWIKYM.

The HTH marR-type domain maps to 6–157; it reads HDELFQAIQQ…AFFNLWIKYM (152 aa). The H-T-H motif DNA-binding region spans 66-89; the sequence is NSFLASRLHISKAAVSKAVHALLK.

Its subcellular location is the cytoplasm. This is an uncharacterized protein from Bacillus subtilis (strain 168).